The sequence spans 502 residues: Ubiquitin-like-specific protease 1A (502 aa).

Residues histidine 393, aspartate 410, and cysteine 461 contribute to the active site.

This sequence belongs to the peptidase C48 family.

In terms of biological role, protease that catalyzes two essential functions in the SUMO pathway: processing of full-length SUMOs to their mature forms and deconjugation of SUMO from targeted proteins. Cleaves precursors of SUM1 and SUM2, and very inefficiently of SUM3. Seems to be the only ULP1 able to cleave SUM3 precursors. Cleaves SUMO peptides better than SUMO-conjugated proteins. This Arabidopsis thaliana (Mouse-ear cress) protein is Ubiquitin-like-specific protease 1A (ULP1A).